Reading from the N-terminus, the 302-residue chain is Homoserine O-acetyltransferase 1 (302 aa).

Cys-142 serves as the catalytic Acyl-thioester intermediate. The substrate site is built by Lys-163 and Ser-192. His-235 functions as the Proton acceptor in the catalytic mechanism. Residue Glu-237 is part of the active site. Arg-249 is a substrate binding site.

The protein belongs to the MetA family.

Its subcellular location is the cytoplasm. It catalyses the reaction L-homoserine + acetyl-CoA = O-acetyl-L-homoserine + CoA. It functions in the pathway amino-acid biosynthesis; L-methionine biosynthesis via de novo pathway; O-acetyl-L-homoserine from L-homoserine: step 1/1. In terms of biological role, transfers an acetyl group from acetyl-CoA to L-homoserine, forming acetyl-L-homoserine. The polypeptide is Homoserine O-acetyltransferase 1 (Ilyobacter polytropus (strain ATCC 51220 / DSM 2926 / LMG 16218 / CuHBu1)).